A 296-amino-acid chain; its full sequence is 2-dehydropantoate 2-reductase (296 aa).

Residues Gly-7 to Gly-12, Asn-94, and Ala-120 each bind NADP(+). Residue Asn-94 coordinates substrate. Residue Lys-175 is the Proton donor of the active site. Positions 179, 183, 193, and 245 each coordinate substrate. Glu-257 provides a ligand contact to NADP(+).

It belongs to the ketopantoate reductase family.

It is found in the cytoplasm. It catalyses the reaction (R)-pantoate + NADP(+) = 2-dehydropantoate + NADPH + H(+). It participates in cofactor biosynthesis; (R)-pantothenate biosynthesis; (R)-pantoate from 3-methyl-2-oxobutanoate: step 2/2. Functionally, catalyzes the NADPH-dependent reduction of ketopantoate into pantoic acid. The sequence is that of 2-dehydropantoate 2-reductase (panE) from Vibrio cholerae serotype O1 (strain ATCC 39315 / El Tor Inaba N16961).